A 507-amino-acid chain; its full sequence is MPKYLINFVQQYASFRIHELESVARLFNIDIQYNKEDLEFIESLDPEIETPFLYVTVNSEEDIKKICTRSVLIKSVYSIWAETQLLDEILNELHSKFDKQFLSNYMINKTFKIEVESYGSKYNQKEKLEMMQKLKDSPLWDSGKCLMHPTEEQMDKHILWYILTDFGVERQGLVKDFTLLPRKVYFGQRIAKGNRDDIIKYNLSDRKYLGTTSMDPELSLVSANMGLVKKGHFVLDPFVGTGSFILVASHFGAQTVGCDIDIKAMRKEEDCNLETNFKDHGLTSQFLGTILCDNSCPPWRVNSMFDSIITDPPYGIRAGARKIGFKENRKFVPVPEGLRRDHIPQCIDYSVPDVMADLLELAAKTLIVGGRLVYWLPTTPDYKETDLPRHPCLRLITASCLQILTNRWGRRLVTMEKIIEYNDSIHNKSLLVQEDLGQFDPQHKDLRAVVFWKKMGTNEKTKKKEQKKKSVENHLKSKNNNDVINNNSNDTNSNNNCNNENNIENQK.

Residues 459-475 (EKTKKKEQKKKSVENHL) show a composition bias toward basic and acidic residues. The segment at 459-507 (EKTKKKEQKKKSVENHLKSKNNNDVINNNSNDTNSNNNCNNENNIENQK) is disordered. The span at 480–507 (NNDVINNNSNDTNSNNNCNNENNIENQK) shows a compositional bias: low complexity.

It belongs to the class I-like SAM-binding methyltransferase superfamily. TRM11 methyltransferase family. As to quaternary structure, part of the heterodimeric TRMT11-TRM112 methyltransferase complex; this complex forms an active tRNA methyltransferase, where TRMT112 acts as an activator of the catalytic subunit TRMT11.

Its subcellular location is the cytoplasm. The enzyme catalyses guanosine(10) in tRNA + S-adenosyl-L-methionine = N(2)-methylguanosine(10) in tRNA + S-adenosyl-L-homocysteine + H(+). Functionally, catalytic subunit of the TRMT11-TRM112 methyltransferase complex, that specifically mediates the S-adenosyl-L-methionine-dependent N(2)-methylation of guanosine nucleotide at position 10 (m2G10) in tRNAs. This is one of the major tRNA (guanine-N(2))-methyltransferases. This chain is tRNA (guanine(10)-N(2))-methyltransferase TRMT11 (trmt11), found in Dictyostelium discoideum (Social amoeba).